We begin with the raw amino-acid sequence, 203 residues long: Holliday junction branch migration complex subunit RuvA (203 aa).

Positions 1 to 63 (MIDYLRGTLT…EDVIRLYGFR (63 aa)) are domain I. The interval 64-142 (TKEKRSLFEK…ELHPGLFSQK (79 aa)) is domain II. The segment at 143–152 (EEQPKPHEKN) is flexible linker. Residues 153–203 (DGNQALDEAMEALKALGYVEKELKKVKPKLEQETLTTDAYIKKALQLMLNR) are domain III.

This sequence belongs to the RuvA family. In terms of assembly, homotetramer. Forms an RuvA(8)-RuvB(12)-Holliday junction (HJ) complex. HJ DNA is sandwiched between 2 RuvA tetramers; dsDNA enters through RuvA and exits via RuvB. An RuvB hexamer assembles on each DNA strand where it exits the tetramer. Each RuvB hexamer is contacted by two RuvA subunits (via domain III) on 2 adjacent RuvB subunits; this complex drives branch migration. In the full resolvosome a probable DNA-RuvA(4)-RuvB(12)-RuvC(2) complex forms which resolves the HJ.

It localises to the cytoplasm. Its function is as follows. The RuvA-RuvB-RuvC complex processes Holliday junction (HJ) DNA during genetic recombination and DNA repair, while the RuvA-RuvB complex plays an important role in the rescue of blocked DNA replication forks via replication fork reversal (RFR). RuvA specifically binds to HJ cruciform DNA, conferring on it an open structure. The RuvB hexamer acts as an ATP-dependent pump, pulling dsDNA into and through the RuvAB complex. HJ branch migration allows RuvC to scan DNA until it finds its consensus sequence, where it cleaves and resolves the cruciform DNA. In Halalkalibacterium halodurans (strain ATCC BAA-125 / DSM 18197 / FERM 7344 / JCM 9153 / C-125) (Bacillus halodurans), this protein is Holliday junction branch migration complex subunit RuvA.